The sequence spans 122 residues: Large ribosomal subunit protein bL12 (122 aa).

The protein belongs to the bacterial ribosomal protein bL12 family. As to quaternary structure, homodimer. Part of the ribosomal stalk of the 50S ribosomal subunit. Forms a multimeric L10(L12)X complex, where L10 forms an elongated spine to which 2 to 4 L12 dimers bind in a sequential fashion. Binds GTP-bound translation factors.

Functionally, forms part of the ribosomal stalk which helps the ribosome interact with GTP-bound translation factors. Is thus essential for accurate translation. This Mycoplasma pneumoniae (strain ATCC 29342 / M129 / Subtype 1) (Mycoplasmoides pneumoniae) protein is Large ribosomal subunit protein bL12.